Consider the following 431-residue polypeptide: Adenylosuccinate lyase (431 aa).

N(6)-(1,2-dicarboxyethyl)-AMP-binding positions include 4-5 (RY), 67-69 (RHD), and 93-94 (TS). Catalysis depends on histidine 141, which acts as the Proton donor/acceptor. Glutamine 212 is a binding site for N(6)-(1,2-dicarboxyethyl)-AMP. Residue serine 262 is the Proton donor/acceptor of the active site. Residues serine 263, 268 to 270 (KRN), asparagine 276, and 307 to 311 (SAERI) contribute to the N(6)-(1,2-dicarboxyethyl)-AMP site.

Belongs to the lyase 1 family. Adenylosuccinate lyase subfamily. Homodimer and homotetramer. Residues from neighboring subunits contribute catalytic and substrate-binding residues to each active site.

It carries out the reaction N(6)-(1,2-dicarboxyethyl)-AMP = fumarate + AMP. It catalyses the reaction (2S)-2-[5-amino-1-(5-phospho-beta-D-ribosyl)imidazole-4-carboxamido]succinate = 5-amino-1-(5-phospho-beta-D-ribosyl)imidazole-4-carboxamide + fumarate. The protein operates within purine metabolism; AMP biosynthesis via de novo pathway; AMP from IMP: step 2/2. It participates in purine metabolism; IMP biosynthesis via de novo pathway; 5-amino-1-(5-phospho-D-ribosyl)imidazole-4-carboxamide from 5-amino-1-(5-phospho-D-ribosyl)imidazole-4-carboxylate: step 2/2. In terms of biological role, catalyzes two reactions in de novo purine nucleotide biosynthesis. Catalyzes the breakdown of 5-aminoimidazole- (N-succinylocarboxamide) ribotide (SAICAR or 2-[5-amino-1-(5-phospho-beta-D-ribosyl)imidazole-4-carboxamido]succinate) to 5-aminoimidazole-4-carboxamide ribotide (AICAR or 5-amino-1-(5-phospho-beta-D-ribosyl)imidazole-4-carboxamide) and fumarate, and of adenylosuccinate (ADS or N(6)-(1,2-dicarboxyethyl)-AMP) to adenosine monophosphate (AMP) and fumarate. The sequence is that of Adenylosuccinate lyase (purB) from Staphylococcus epidermidis (strain ATCC 35984 / DSM 28319 / BCRC 17069 / CCUG 31568 / BM 3577 / RP62A).